The chain runs to 1574 residues: Multiple epidermal growth factor-like domains protein 6 (1574 aa).

A signal peptide spans 1–27; that stretch reads MPVRAEARAAWRVVALALLLLPAMPAA. The EMI domain maps to 40–122; sequence MPHVCAEQKL…QKPGQEGCLS (83 aa). Intrachain disulfides connect Cys-44–Cys-108, Cys-74–Cys-80, Cys-107–Cys-120, Cys-127–Cys-138, Cys-134–Cys-147, Cys-149–Cys-162, Cys-168–Cys-179, Cys-175–Cys-188, Cys-190–Cys-203, Cys-209–Cys-220, Cys-216–Cys-230, Cys-232–Cys-245, Cys-251–Cys-262, Cys-258–Cys-271, Cys-273–Cys-286, Cys-292–Cys-303, Cys-299–Cys-312, Cys-314–Cys-327, Cys-338–Cys-349, Cys-345–Cys-358, Cys-360–Cys-373, Cys-379–Cys-389, Cys-385–Cys-398, Cys-400–Cys-411, Cys-419–Cys-430, Cys-426–Cys-439, Cys-441–Cys-454, Cys-524–Cys-537, Cys-531–Cys-544, Cys-546–Cys-555, Cys-568–Cys-580, Cys-574–Cys-587, Cys-589–Cys-598, Cys-611–Cys-623, Cys-617–Cys-630, Cys-632–Cys-641, Cys-654–Cys-668, Cys-660–Cys-675, Cys-677–Cys-686, Cys-699–Cys-711, Cys-705–Cys-718, Cys-722–Cys-731, Cys-744–Cys-755, Cys-750–Cys-762, Cys-764–Cys-773, Cys-786–Cys-799, Cys-793–Cys-806, Cys-808–Cys-817, Cys-830–Cys-842, Cys-836–Cys-849, Cys-851–Cys-860, Cys-873–Cys-886, Cys-879–Cys-893, Cys-895–Cys-904, Cys-917–Cys-929, Cys-923–Cys-936, Cys-938–Cys-947, Cys-960–Cys-972, Cys-966–Cys-979, Cys-981–Cys-990, Cys-1003–Cys-1015, Cys-1009–Cys-1022, Cys-1024–Cys-1033, Cys-1046–Cys-1058, Cys-1052–Cys-1065, Cys-1067–Cys-1076, Cys-1089–Cys-1101, Cys-1095–Cys-1108, Cys-1110–Cys-1119, Cys-1132–Cys-1144, Cys-1138–Cys-1151, Cys-1153–Cys-1162, Cys-1175–Cys-1187, Cys-1181–Cys-1194, Cys-1196–Cys-1205, Cys-1218–Cys-1231, Cys-1224–Cys-1238, Cys-1240–Cys-1249, Cys-1262–Cys-1274, Cys-1268–Cys-1281, Cys-1283–Cys-1292, Cys-1305–Cys-1317, Cys-1311–Cys-1324, Cys-1326–Cys-1335, Cys-1348–Cys-1360, Cys-1354–Cys-1367, Cys-1369–Cys-1378, Cys-1391–Cys-1403, Cys-1397–Cys-1410, Cys-1412–Cys-1421, Cys-1434–Cys-1446, Cys-1440–Cys-1453, Cys-1455–Cys-1464, Cys-1477–Cys-1489, Cys-1483–Cys-1496, Cys-1498–Cys-1507, Cys-1520–Cys-1532, Cys-1526–Cys-1539, and Cys-1541–Cys-1550. The 41-residue stretch at 123-163 folds into the EGF-like 1; calcium-binding domain; the sequence is DVDECASANGGCEGPCCNTVGGFYCRCPPGYQLQGDGKTCQ. The 41-residue stretch at 164 to 204 folds into the EGF-like 2; calcium-binding domain; that stretch reads DVDECRAHNGGCQHRCVNTPGSYLCECKPGFRLHTDGRTCL. 2 consecutive EGF-like domains span residues 205–246 and 247–287; these read AISS…RRCV and RRSP…KTCE. The EGF-like 5; calcium-binding domain occupies 288–328; it reads DVDECALGLAQCAHGCLNTQGSFKCVCHAGYELGADGRQCY. EGF-like domains are found at residues 334-374 and 375-412; these read IVNS…KTCI and DIDDCANSPCCQQACANTPGGYECSCFAGYRLNTDGCG. The 41-residue stretch at 415–455 folds into the EGF-like 8; calcium-binding domain; sequence DVDECASGHGGCEHHCSNLAGSFQCFCEAGYRLDEDRRGCT. 24 consecutive EGF-like domains span residues 520-556, 564-599, 607-642, 650-687, 695-732, 740-774, 782-818, 826-861, 869-905, 913-948, 956-991, 999-1034, 1042-1077, 1085-1120, 1128-1163, 1171-1206, 1214-1250, 1258-1293, 1301-1336, 1344-1379, 1387-1422, 1430-1465, 1473-1508, and 1516-1551; these read FGHDCSLTCDDCRNGGTCFPGQDGCDCPEGWTGIICN, FGKNCSSPCTCQNGGTCDPVLGACRCPPGVSGAHCE, YGKHCRKKCHCANRGRCHRLYGACLCDPGLYGRFCH, FGPGCSEDCLCEQSHTRSCNPKDGSCSCKAGFQGERCQ, FGPGCRHRCTCQPGVACDPVSGECRTQCPPGYQGEDCG, FGVNCSGSCSCVGAPCHRVTGECLCPPGKTGEDCG, WGLGCQEICPACEHGASCNPETGTCLCLPGFVGSRCQ, YGTGCQIRCACANDGHCDPTTGRCSCAPGWTGLSCQ, WGPDCIHPCNCSAGHGNCDAVSGLCLCEAGYEGPRCE, YGPSCEQKCRCEHGAACDHVSGACTCPAGWRGSFCE, FGLDCDSACNCSAGAPCDAVTGSCICPAGRWGPRCA, FGLNCSQICTCFNGASCDSVTGQCHCAPGWMGPTCL, YGKNCQHSCLCRNGGRCDPILGQCTCPEGWTGLACE, YAAGCQLNCSCLHGGICDRLTGHCLCPAGWTGDKCQ, FGVHCEEHCACRKGASCHHVTGACFCPPGWRGPHCE, FGEACAQRCLCPTNASCHHVTGECRCPPGFTGLSCE, FGKDCEHLCQCPGETWACDPASGVCTCAAGYHGTGCL, YGPGCEHICKCLNGGTCDPATGACYCPAGFLGADCS, FGPSCAHVCACRQGAACDPVSGACICSPGKTGVRCE, FGKGCELKCACRNGGLCHATNGSCSCPLGWMGPHCE, YGAACLLECFCQNNGSCEPTTGACLCGPGFYGQACE, HGPGCQRVCECQQGAPCDPVSGQCLCPAGFHGQFCE, FGDGCLQQCNCHTGVPCDPISGLCLCPPGRTGAACD, and FGPGCALRCDCGGGADCDPISGQCHCVDSYMGPTCR. Over residues 1555–1568 the composition is skewed to polar residues; that stretch reads TQISSSRPAPQHPS. The disordered stretch occupies residues 1555-1574; that stretch reads TQISSSRPAPQHPSSRAMKH.

As to expression, expressed in lung.

It is found in the secreted. The sequence is that of Multiple epidermal growth factor-like domains protein 6 (Megf6) from Rattus norvegicus (Rat).